The following is a 50-amino-acid chain: Protein PsbN (50 aa).

Residues 14-34 traverse the membrane as a helical segment; sequence VAVTILAVLLALTGFGLWTAF.

The protein belongs to the PsbN family.

It localises to the cellular thylakoid membrane. In terms of biological role, may play a role in photosystem I and II biogenesis. The chain is Protein PsbN from Prochlorococcus marinus subsp. pastoris (strain CCMP1986 / NIES-2087 / MED4).